Reading from the N-terminus, the 710-residue chain is Elongation factor G (710 aa).

In terms of domain architecture, tr-type G spans 8 to 297 (ERVRNIGIAA…AVVDYLPSPI (290 aa)). Residues 17-24 (AHIDAGKT), 96-100 (DTPGH), and 150-153 (NKMD) contribute to the GTP site.

The protein belongs to the TRAFAC class translation factor GTPase superfamily. Classic translation factor GTPase family. EF-G/EF-2 subfamily.

The protein resides in the cytoplasm. Functionally, catalyzes the GTP-dependent ribosomal translocation step during translation elongation. During this step, the ribosome changes from the pre-translocational (PRE) to the post-translocational (POST) state as the newly formed A-site-bound peptidyl-tRNA and P-site-bound deacylated tRNA move to the P and E sites, respectively. Catalyzes the coordinated movement of the two tRNA molecules, the mRNA and conformational changes in the ribosome. The chain is Elongation factor G from Synechococcus sp. (strain JA-3-3Ab) (Cyanobacteria bacterium Yellowstone A-Prime).